A 148-amino-acid chain; its full sequence is Large ribosomal subunit protein bL27m (148 aa).

A mitochondrion-targeting transit peptide spans 1–30 (MALAVLAWRTRTAVIALLSPPQAAALAVRY).

The protein belongs to the bacterial ribosomal protein bL27 family. In terms of assembly, component of the mitochondrial ribosome large subunit (39S) which comprises a 16S rRNA and about 50 distinct proteins.

The protein localises to the mitochondrion. This Bos taurus (Bovine) protein is Large ribosomal subunit protein bL27m (MRPL27).